Here is a 130-residue protein sequence, read N- to C-terminus: Small ribosomal subunit protein uS8 (130 aa).

The protein belongs to the universal ribosomal protein uS8 family. In terms of assembly, part of the 30S ribosomal subunit.

In terms of biological role, one of the primary rRNA binding proteins, it binds directly to 16S rRNA central domain where it helps coordinate assembly of the platform of the 30S subunit. This chain is Small ribosomal subunit protein uS8, found in Methanoculleus marisnigri (strain ATCC 35101 / DSM 1498 / JR1).